A 367-amino-acid polypeptide reads, in one-letter code: Uroporphyrinogen decarboxylase (367 aa).

At Met1 the chain carries N-acetylmethionine. Residues Arg37, Ala39, Arg41, Arg50, Asp86, Tyr164, Ser219, and His339 each coordinate coproporphyrinogen I. 3 residues coordinate coproporphyrinogen III: Arg37, Ala39, and Arg41. Residues Asp86, Tyr164, Ser219, and His339 each contribute to the coproporphyrinogen III site.

The protein belongs to the uroporphyrinogen decarboxylase family. As to quaternary structure, homodimer.

It localises to the cytoplasm. The protein localises to the cytosol. The enzyme catalyses uroporphyrinogen III + 4 H(+) = coproporphyrinogen III + 4 CO2. It carries out the reaction uroporphyrinogen I + 4 H(+) = coproporphyrinogen I + 4 CO2. Its pathway is porphyrin-containing compound metabolism; protoporphyrin-IX biosynthesis; coproporphyrinogen-III from 5-aminolevulinate: step 4/4. Its function is as follows. Catalyzes the sequential decarboxylation of the four acetate side chains of uroporphyrinogen to form coproporphyrinogen and participates in the fifth step in the heme biosynthetic pathway. Isomer I or isomer III of uroporphyrinogen may serve as substrate, but only coproporphyrinogen III can ultimately be converted to heme. In vitro also decarboxylates pentacarboxylate porphyrinogen I. This chain is Uroporphyrinogen decarboxylase, found in Pongo abelii (Sumatran orangutan).